The chain runs to 124 residues: Small ribosomal subunit protein bS6 (124 aa).

This sequence belongs to the bacterial ribosomal protein bS6 family.

Binds together with bS18 to 16S ribosomal RNA. This chain is Small ribosomal subunit protein bS6, found in Chromobacterium violaceum (strain ATCC 12472 / DSM 30191 / JCM 1249 / CCUG 213 / NBRC 12614 / NCIMB 9131 / NCTC 9757 / MK).